We begin with the raw amino-acid sequence, 246 residues long: MMIIPALDLIDGTVVRLHQGDYGKQRDYGNDPLPRLQDYAAQGAEVLHLVDLTGAKDPAKRQIPLIKTLVAGVNVPVQVGGGVRSEEDVAALLEAGVARVVVGSTAVKSPERVKGWFERFGADALVLALDVRIDEQGNKQVAVSGWQENSGVSLEQLVETYLPVGLKHVLCTDISRDGTLAGSNVSLYEEVCARYPQVAFQSSGGIGDINDVAALRGTGVRGVIVGRALLEGKFTVKEAIACWQNA.

D8 serves as the catalytic Proton acceptor. The active-site Proton donor is D130.

Belongs to the HisA/HisF family.

The protein localises to the cytoplasm. It catalyses the reaction 1-(5-phospho-beta-D-ribosyl)-5-[(5-phospho-beta-D-ribosylamino)methylideneamino]imidazole-4-carboxamide = 5-[(5-phospho-1-deoxy-D-ribulos-1-ylimino)methylamino]-1-(5-phospho-beta-D-ribosyl)imidazole-4-carboxamide. It functions in the pathway amino-acid biosynthesis; L-histidine biosynthesis; L-histidine from 5-phospho-alpha-D-ribose 1-diphosphate: step 4/9. The chain is 1-(5-phosphoribosyl)-5-[(5-phosphoribosylamino)methylideneamino] imidazole-4-carboxamide isomerase from Shigella sonnei (strain Ss046).